Here is a 359-residue protein sequence, read N- to C-terminus: Mannonate dehydratase (359 aa).

The protein belongs to the mannonate dehydratase family. Fe(2+) is required as a cofactor. It depends on Mn(2+) as a cofactor.

It carries out the reaction D-mannonate = 2-dehydro-3-deoxy-D-gluconate + H2O. Its pathway is carbohydrate metabolism; pentose and glucuronate interconversion. Catalyzes the dehydration of D-mannonate. The sequence is that of Mannonate dehydratase from Moorella thermoacetica (strain ATCC 39073 / JCM 9320).